Here is a 274-residue protein sequence, read N- to C-terminus: MKELKKIIEETYENKNKINLNNLDYEILQTIFRVIKLLNNGIIRISEKKDNTWITHEWLKKAVLLYIYIKENKFIEGSYTSYYDKVPLKYEKYNEKQFKKEKVRIVPPATIRYGAFINYNTIIMPSYINIGAYIDQGTMIDTWATIGSCAQIGKNVHISGGVGIGGVLEPLQNNPTIIEDNCFIGARSEIVEGVVIEKGCVISMGVFIGQSTKIYDRENGKIFYGRVPAHSVVVSGTLPSENRNYNLYAAIIVKKVDAKTLGKTEINQLLRNIK.

Residues Arg-104 and Asp-141 each coordinate substrate.

The protein belongs to the transferase hexapeptide repeat family. In terms of assembly, homotrimer.

The protein resides in the cytoplasm. It catalyses the reaction (S)-2,3,4,5-tetrahydrodipicolinate + succinyl-CoA + H2O = (S)-2-succinylamino-6-oxoheptanedioate + CoA. It functions in the pathway amino-acid biosynthesis; L-lysine biosynthesis via DAP pathway; LL-2,6-diaminopimelate from (S)-tetrahydrodipicolinate (succinylase route): step 1/3. This chain is 2,3,4,5-tetrahydropyridine-2,6-dicarboxylate N-succinyltransferase, found in Buchnera aphidicola subsp. Acyrthosiphon pisum (strain APS) (Acyrthosiphon pisum symbiotic bacterium).